The sequence spans 254 residues: Enolase-phosphatase E1 (254 aa).

Residues Asp13 and Glu15 each coordinate Mg(2+). Substrate is bound by residues 127–128 (SS) and Lys173. Residue Asp200 participates in Mg(2+) binding.

The protein belongs to the HAD-like hydrolase superfamily. MasA/MtnC family. Monomer. Requires Mg(2+) as cofactor.

Its subcellular location is the cytoplasm. The protein resides in the nucleus. The enzyme catalyses 5-methylsulfanyl-2,3-dioxopentyl phosphate + H2O = 1,2-dihydroxy-5-(methylsulfanyl)pent-1-en-3-one + phosphate. It functions in the pathway amino-acid biosynthesis; L-methionine biosynthesis via salvage pathway; L-methionine from S-methyl-5-thio-alpha-D-ribose 1-phosphate: step 3/6. Its pathway is amino-acid biosynthesis; L-methionine biosynthesis via salvage pathway; L-methionine from S-methyl-5-thio-alpha-D-ribose 1-phosphate: step 4/6. Functionally, bifunctional enzyme that catalyzes the enolization of 2,3-diketo-5-methylthiopentyl-1-phosphate (DK-MTP-1-P) into the intermediate 2-hydroxy-3-keto-5-methylthiopentenyl-1-phosphate (HK-MTPenyl-1-P), which is then dephosphorylated to form the acireductone 1,2-dihydroxy-3-keto-5-methylthiopentene (DHK-MTPene). The protein is Enolase-phosphatase E1 (utr4) of Sclerotinia sclerotiorum (strain ATCC 18683 / 1980 / Ss-1) (White mold).